The chain runs to 316 residues: Aspartate carbamoyltransferase catalytic subunit (316 aa).

Positions 66 and 67 each coordinate carbamoyl phosphate. Residue Lys94 coordinates L-aspartate. Arg116, His146, and Gln149 together coordinate carbamoyl phosphate. Positions 180 and 235 each coordinate L-aspartate. Carbamoyl phosphate-binding residues include Gly276 and Pro277.

Belongs to the aspartate/ornithine carbamoyltransferase superfamily. ATCase family. As to quaternary structure, heterododecamer (2C3:3R2) of six catalytic PyrB chains organized as two trimers (C3), and six regulatory PyrI chains organized as three dimers (R2).

The enzyme catalyses carbamoyl phosphate + L-aspartate = N-carbamoyl-L-aspartate + phosphate + H(+). It functions in the pathway pyrimidine metabolism; UMP biosynthesis via de novo pathway; (S)-dihydroorotate from bicarbonate: step 2/3. In terms of biological role, catalyzes the condensation of carbamoyl phosphate and aspartate to form carbamoyl aspartate and inorganic phosphate, the committed step in the de novo pyrimidine nucleotide biosynthesis pathway. This is Aspartate carbamoyltransferase catalytic subunit from Stenotrophomonas maltophilia (strain K279a).